A 257-amino-acid chain; its full sequence is 3-deoxy-manno-octulosonate cytidylyltransferase (257 aa).

The protein belongs to the KdsB family.

It is found in the cytoplasm. The catalysed reaction is 3-deoxy-alpha-D-manno-oct-2-ulosonate + CTP = CMP-3-deoxy-beta-D-manno-octulosonate + diphosphate. It functions in the pathway nucleotide-sugar biosynthesis; CMP-3-deoxy-D-manno-octulosonate biosynthesis; CMP-3-deoxy-D-manno-octulosonate from 3-deoxy-D-manno-octulosonate and CTP: step 1/1. The protein operates within bacterial outer membrane biogenesis; lipopolysaccharide biosynthesis. Functionally, activates KDO (a required 8-carbon sugar) for incorporation into bacterial lipopolysaccharide in Gram-negative bacteria. The protein is 3-deoxy-manno-octulosonate cytidylyltransferase of Rhodospirillum centenum (strain ATCC 51521 / SW).